The primary structure comprises 538 residues: Phosphoenolpyruvate carboxykinase (ATP) (538 aa).

Residues R62, Y203, and K209 each coordinate substrate. Residues K209, H228, and 244-252 contribute to the ATP site; that span reads GLSGTGKTT. The Mn(2+) site is built by K209 and H228. D265 is a binding site for Mn(2+). ATP-binding positions include E293, R329, 445 to 446, and T451; that span reads RI. R329 contributes to the substrate binding site.

It belongs to the phosphoenolpyruvate carboxykinase (ATP) family. Monomer. The cofactor is Mn(2+).

It is found in the cytoplasm. It catalyses the reaction oxaloacetate + ATP = phosphoenolpyruvate + ADP + CO2. The protein operates within carbohydrate biosynthesis; gluconeogenesis. Its function is as follows. Involved in the gluconeogenesis. Catalyzes the conversion of oxaloacetate (OAA) to phosphoenolpyruvate (PEP) through direct phosphoryl transfer between the nucleoside triphosphate and OAA. In Haemophilus ducreyi (strain 35000HP / ATCC 700724), this protein is Phosphoenolpyruvate carboxykinase (ATP).